The primary structure comprises 269 residues: Aminoglycoside (3'') (9) adenylyltransferase (269 aa).

It carries out the reaction streptomycin + ATP = 3''-O-adenylylstreptomycin + diphosphate. It catalyses the reaction spectinomycin + ATP = 9-O-adenylylspectinomycin + diphosphate. Mediates bacterial resistance to the antibiotic spectinomycin and probably also to streptomycin. This is Aminoglycoside (3'') (9) adenylyltransferase from Rhizobium radiobacter (Agrobacterium tumefaciens).